The sequence spans 470 residues: ATP synthase subunit beta (470 aa).

157–164 contacts ATP; sequence GGAGVGKT.

It belongs to the ATPase alpha/beta chains family. In terms of assembly, F-type ATPases have 2 components, CF(1) - the catalytic core - and CF(0) - the membrane proton channel. CF(1) has five subunits: alpha(3), beta(3), gamma(1), delta(1), epsilon(1). CF(0) has three main subunits: a(1), b(2) and c(9-12). The alpha and beta chains form an alternating ring which encloses part of the gamma chain. CF(1) is attached to CF(0) by a central stalk formed by the gamma and epsilon chains, while a peripheral stalk is formed by the delta and b chains.

It is found in the cell membrane. It carries out the reaction ATP + H2O + 4 H(+)(in) = ADP + phosphate + 5 H(+)(out). Its function is as follows. Produces ATP from ADP in the presence of a proton gradient across the membrane. The catalytic sites are hosted primarily by the beta subunits. In Pelotomaculum thermopropionicum (strain DSM 13744 / JCM 10971 / SI), this protein is ATP synthase subunit beta.